A 235-amino-acid chain; its full sequence is UPF0749 protein YlxX (235 aa).

The helical transmembrane segment at 6–26 threads the bilayer; that stretch reads SFISISVLMVIFGLMISVQFN.

The protein belongs to the UPF0749 family.

Its subcellular location is the cell membrane. In Bacillus subtilis (strain 168), this protein is UPF0749 protein YlxX (ylxX).